The primary structure comprises 448 residues: tRNA wybutosine-synthesizing protein 2 homolog (448 aa).

Residues S218, K225, E265, and 293–294 (DN) each bind S-adenosyl-L-methionine.

It belongs to the class I-like SAM-binding methyltransferase superfamily. TRM5/TYW2 family.

The catalysed reaction is 4-demethylwyosine(37) in tRNA(Phe) + S-adenosyl-L-methionine = 4-demethyl-7-[(3S)-3-amino-3-carboxypropyl]wyosine(37) in tRNA(Phe) + S-methyl-5'-thioadenosine + H(+). The protein operates within tRNA modification; wybutosine-tRNA(Phe) biosynthesis. In terms of biological role, S-adenosyl-L-methionine-dependent transferase that acts as a component of the wybutosine biosynthesis pathway. Wybutosine is a hyper modified guanosine with a tricyclic base found at the 3'-position adjacent to the anticodon of eukaryotic phenylalanine tRNA. Catalyzes the transfer of the alpha-amino-alpha-carboxypropyl (acp) group from S-adenosyl-L-methionine to the C-7 position of 4-demethylwyosine (imG-14) to produce wybutosine-86. The protein is tRNA wybutosine-synthesizing protein 2 homolog (TRMT12) of Macaca fascicularis (Crab-eating macaque).